A 665-amino-acid polypeptide reads, in one-letter code: Lamin-A (665 aa).

Met1 is modified (N-acetylmethionine). The head stretch occupies residues 1 to 29 (METPGQKRATRSTHTPLSPTRITRLQEKE). The residue at position 18 (Ser18) is a Phosphoserine. The IF rod domain maps to 27-383 (EKEDLQGLND…KLLEGEEERL (357 aa)). Residues 30-66 (DLQGLNDRLAVYIDKVRSLELENARLRLRITESEDVI) are coil 1A. A linker 1 region spans residues 67 to 76 (SREVTGIKSA). Positions 77–214 (YETELADARK…SIYNEEMRET (138 aa)) are coil 1B. A linker 2 region spans residues 215-238 (KRRHETRLVEVDNGRQREFESKLA). Positions 239–383 (DALHELRAQH…KLLEGEEERL (145 aa)) are coil 2. Disordered regions lie at residues 381 to 441 (ERLR…SVEE), 550 to 581 (DDED…GEYN), and 602 to 641 (ASQG…LGES). Residues 384 to 664 (RLSPSPNTQK…AQVAPQNCSI (281 aa)) are tail. Ser388 is modified (phosphoserine). Residues 399–411 (IASHSGAHISSSA) show a composition bias toward low complexity. Residues 413–418 (KRRRLE) carry the Nuclear localization signal motif. In terms of domain architecture, LTD spans 425–542 (SSFTQHARTT…EEVAMRKLVR (118 aa)). The span at 427 to 436 (FTQHARTTGK) shows a compositional bias: polar residues. Over residues 605–630 (GSGLVTGSSGSSSSSVTLTRTYRSTG) the composition is skewed to low complexity. Cys662 is subject to Cysteine methyl ester. The S-farnesyl cysteine moiety is linked to residue Cys662. The propeptide at 663 to 665 (SIM) is removed in mature form.

This sequence belongs to the intermediate filament family. In terms of assembly, homodimer. Lamin dimers then assemble into dimeric head-to-tail polymers. Ultimately, two head-to-tail polymers assemble laterally into a protofilament with a uniformly shaped rod of 3.5 nm in diameter. Post-translationally, phosphorylation plays a key role in lamin organization, subcellular localization and nuclear envelope disintegration. Phosphorylation by CDK1 at Ser-18 at the onset of mitosis drives lamin disassembly and nuclear envelope breakdown.

It is found in the nucleus lamina. Its subcellular location is the nucleus envelope. The protein resides in the nucleus. The protein localises to the nucleoplasm. It localises to the nucleus matrix. In terms of biological role, lamins are intermediate filament proteins that assemble into a filamentous meshwork, and which constitute the major components of the nuclear lamina, a fibrous layer on the nucleoplasmic side of the inner nuclear membrane. Lamins provide a framework for the nuclear envelope, bridging the nuclear envelope and chromatin, thereby playing an important role in nuclear assembly, chromatin organization, nuclear membrane and telomere dynamics. The structural integrity of the lamina is strictly controlled by the cell cycle, as seen by the disintegration and formation of the nuclear envelope in prophase and telophase, respectively. The polypeptide is Lamin-A (lmna) (Xenopus laevis (African clawed frog)).